Consider the following 72-residue polypeptide: MMPQLETATYLTQYRWTLIALFLLFSFLVVSVLPAVKTNFLIRRSIGAGWTGAPKTSDLNKGPASLWSWDKI.

A helical transmembrane segment spans residues 16-36; sequence WTLIALFLLFSFLVVSVLPAV.

It belongs to the ATPase protein 8 family. F-type ATPases have 2 components, CF(1) - the catalytic core - and CF(0) - the membrane proton channel.

The protein resides in the mitochondrion membrane. Its function is as follows. Mitochondrial membrane ATP synthase (F(1)F(0) ATP synthase or Complex V) produces ATP from ADP in the presence of a proton gradient across the membrane which is generated by electron transport complexes of the respiratory chain. F-type ATPases consist of two structural domains, F(1) - containing the extramembraneous catalytic core and F(0) - containing the membrane proton channel, linked together by a central stalk and a peripheral stalk. During catalysis, ATP synthesis in the catalytic domain of F(1) is coupled via a rotary mechanism of the central stalk subunits to proton translocation. Part of the complex F(0) domain. Minor subunit located with subunit a in the membrane. This Metridium senile (Brown sea anemone) protein is ATP synthase protein 8 (MTATP8).